Reading from the N-terminus, the 877-residue chain is Envelope glycoprotein gp160 (877 aa).

The N-terminal stretch at 1–19 (MKLTLLIGILLIGIGVVLN) is a signal peptide. Over 20-707 (TRQQWVTVFY…SWFDFSKWLN (688 aa)) the chain is Extracellular. Residues N36, N69, N118, N135, N148, N158, N173, N204, N216, N258, N261, N272, N282, N288, N300, N312, N322, N379, N420, N431, N495, and N498 are each glycosylated (N-linked (GlcNAc...) asparagine; by host). 5 disulfide bridges follow: C102/C224, C109/C215, C114/C174, C237/C267, and C247/C259. A V1 region spans residues 114-173 (CVELNSSEPTTTPKSTTASTTNITASTTTLPCVQNKTSTVLESCNETIIEKELNEEPASN). A V2 region spans residues 174–215 (CTFAMAGYVRDQKKKYSVVWNDAEIMCKKGNNSNRECYMIHC). The interval 317–349 (CKRPGNKTVLPVTIMAGLVFHSQRYNTRLRQAW) is V3. Residues C317 and C350 are joined by a disulfide bond. 2 cysteine pairs are disulfide-bonded: C402–C478 and C409–C451. Positions 409–451 (CKMDWFLNYLNNRTVDPDHNPCNGTKGKGKAPGPCAQRTYVAC) are V4. Residues 494–501 (KNRTNVTL) form a V5 region. The interval 544–564 (VPFVLGFLGFLGAAGTAMGAA) is fusion peptide. Residues 607 to 623 (LNARVTALEKYLEDQAR) are immunosuppression. N-linked (GlcNAc...) asparagine; by host glycosylation is found at N652 and N668. A coiled-coil region spans residues 668–692 (NITTQLEEARAQEEKNLDAYQKLSS). The tract at residues 689-710 (KLSSWSDFWSWFDFSKWLNILK) is MPER; binding to GalCer. A helical transmembrane segment spans residues 708–728 (ILKIGFLDVLGIIGLRLLYTV). Residues 729 to 877 (YSCIARVRQG…VRQGLEGILN (149 aa)) are Cytoplasmic-facing. Residues 739–742 (YSPL) carry the YXXL motif; contains endocytosis signal motif. The disordered stretch occupies residues 751–779 (WKGQPDNAEGPGEGGDKRKNSSEPWQKES).

In terms of assembly, the mature envelope protein (Env) consists of a homotrimer of non-covalently associated gp120-gp41 heterodimers. The resulting complex protrudes from the virus surface as a spike. Interacts with host CD4 and CCR5. Gp120 also interacts with the C-type lectins CD209/DC-SIGN and CLEC4M/DC-SIGNR (collectively referred to as DC-SIGN(R)). The mature envelope protein (Env) consists of a homotrimer of non-covalently associated gp120-gp41 heterodimers. The resulting complex protrudes from the virus surface as a spike. Specific enzymatic cleavages in vivo yield mature proteins. Envelope glycoproteins are synthesized as an inactive precursor that is heavily N-glycosylated and processed likely by host cell furin in the Golgi to yield the mature SU and TM proteins. The cleavage site between SU and TM requires the minimal sequence [KR]-X-[KR]-R.

The protein resides in the virion membrane. Its subcellular location is the host cell membrane. It is found in the host endosome membrane. In terms of biological role, the surface protein gp120 (SU) attaches the virus to the host lymphoid cell by binding to the primary receptor CD4. This interaction induces a structural rearrangement creating a high affinity binding site for a chemokine coreceptor like CCR5. This peculiar 2 stage receptor-interaction strategy allows gp120 to maintain the highly conserved coreceptor-binding site in a cryptic conformation, protected from neutralizing antibodies. These changes are transmitted to the transmembrane protein gp41 and are thought to activate its fusogenic potential by unmasking its fusion peptide. Surface protein gp120 (SU) may target the virus to gut-associated lymphoid tissue (GALT) by binding host ITGA4/ITGB7 (alpha-4/beta-7 integrins), a complex that mediates T-cell migration to the GALT. Interaction between gp120 and ITGA4/ITGB7 would allow the virus to enter GALT early in the infection, infecting and killing most of GALT's resting CD4+ T-cells. This T-cell depletion is believed to be the major insult to the host immune system leading to AIDS. Its function is as follows. The surface protein gp120 is a ligand for CD209/DC-SIGN and CLEC4M/DC-SIGNR, which are respectively found on dendritic cells (DCs), and on endothelial cells of liver sinusoids and lymph node sinuses. These interactions allow capture of viral particles at mucosal surfaces by these cells and subsequent transmission to permissive cells. DCs are professional antigen presenting cells, critical for host immunity by inducing specific immune responses against a broad variety of pathogens. They act as sentinels in various tissues where they take up antigen, process it, and present it to T-cells following migration to lymphoid organs. SIV subverts the migration properties of dendritic cells to gain access to CD4+ T-cells in lymph nodes. Virus transmission to permissive T-cells occurs either in trans (without DCs infection, through viral capture and transmission), or in cis (following DCs productive infection, through the usual CD4-gp120 interaction), thereby inducing a robust infection. In trans infection, bound virions remain infectious over days and it is proposed that they are not degraded, but protected in non-lysosomal acidic organelles within the DCs close to the cell membrane thus contributing to the viral infectious potential during DCs' migration from the periphery to the lymphoid tissues. On arrival at lymphoid tissues, intact virions recycle back to DCs' cell surface allowing virus transmission to CD4+ T-cells. Virion capture also seems to lead to MHC-II-restricted viral antigen presentation, and probably to the activation of SIV-specific CD4+ cells. Functionally, the transmembrane protein gp41 (TM) acts as a class I viral fusion protein. Under the current model, the protein has at least 3 conformational states: pre-fusion native state, pre-hairpin intermediate state, and post-fusion hairpin state. During fusion of viral and target intracellular membranes, the coiled coil regions (heptad repeats) assume a trimer-of-hairpins structure, positioning the fusion peptide in close proximity to the C-terminal region of the ectodomain. The formation of this structure appears to drive apposition and subsequent fusion of viral and target cell membranes. Complete fusion occurs in host cell endosomes. The virus undergoes clathrin-dependent internalization long before endosomal fusion, thus minimizing the surface exposure of conserved viral epitopes during fusion and reducing the efficacy of inhibitors targeting these epitopes. Membranes fusion leads to delivery of the nucleocapsid into the cytoplasm. In terms of biological role, the envelope glycoprotein gp160 precursor down-modulates cell surface CD4 antigen by interacting with it in the endoplasmic reticulum and blocking its transport to the cell surface. The gp120-gp41 heterodimer allows rapid transcytosis of the virus through CD4 negative cells such as simple epithelial monolayers of the intestinal, rectal and endocervical epithelial barriers. Both gp120 and gp41 specifically recognize glycosphingolipids galactosyl-ceramide (GalCer) or 3' sulfo-galactosyl-ceramide (GalS) present in the lipid rafts structures of epithelial cells. Binding to these alternative receptors allows the rapid transcytosis of the virus through the epithelial cells. This transcytotic vesicle-mediated transport of virions from the apical side to the basolateral side of the epithelial cells does not involve infection of the cells themselves. This chain is Envelope glycoprotein gp160 (env), found in Cercopithecidae (Old World monkeys).